The following is a 411-amino-acid chain: Squalene synthase (411 aa).

NADP(+)-binding residues include R49 and R74. Mg(2+)-binding residues include D77, E80, and D81. Positions 212, 312, and 314 each coordinate NADP(+). Residues 388 to 408 (SPVLIVVIFIILAIILAQLFG) form a helical membrane-spanning segment.

This sequence belongs to the phytoene/squalene synthase family. The cofactor is Mg(2+).

The protein resides in the membrane. It carries out the reaction 2 (2E,6E)-farnesyl diphosphate + NADH + H(+) = squalene + 2 diphosphate + NAD(+). The catalysed reaction is 2 (2E,6E)-farnesyl diphosphate + NADPH + H(+) = squalene + 2 diphosphate + NADP(+). In terms of biological role, converts farnesyl diphosphate (FPP) into squalene, a precursor for sterol biosynthesis in eukaryotes. This is Squalene synthase from Solanum lycopersicum (Tomato).